The chain runs to 407 residues: Mitochondrial protein import protein mas5 (407 aa).

The J domain occupies 6-68 (KLYEVLNVDV…EKRATYDRFG (63 aa)). Residues Leu-110 and 129-131 (LAL) contribute to the substrate site. Residues 124 to 207 (GKTTKLALQK…CDGAKVISQR (84 aa)) form a CR-type zinc finger. Cys-137, Cys-140, Cys-153, Cys-156, Cys-179, Cys-182, Cys-195, and Cys-198 together coordinate Zn(2+). CXXCXGXG motif repeat units lie at residues 137–144 (CPKCSGRG), 153–160 (CASCNGSG), 179–186 (CPDCNGAG), and 195–202 (CKECDGAK). Residues 209-210 (IL) and 241-243 (VIF) each bind substrate. Residues 375-407 (VRIDNNVDPTTATSMDEDEDEEGGHPGVQCAQQ) form a disordered region. Cys-404 is modified (cysteine methyl ester). The S-farnesyl cysteine moiety is linked to residue Cys-404. The propeptide at 405 to 407 (AQQ) is removed in mature form.

Homodimer.

It is found in the cytoplasm. The protein localises to the nucleus. In terms of biological role, probably involved in mitochondrial protein import. Plays a role in microtubule cytoskeleton organization. The chain is Mitochondrial protein import protein mas5 (mas5) from Schizosaccharomyces pombe (strain 972 / ATCC 24843) (Fission yeast).